A 434-amino-acid polypeptide reads, in one-letter code: UDP-N-acetylglucosamine 1-carboxyvinyltransferase (434 aa).

Phosphoenolpyruvate is bound at residue 22 to 23 (KN). Arg-97 lines the UDP-N-acetyl-alpha-D-glucosamine pocket. Residue Asp-121 is the Proton donor of the active site. Residues Asp-319 and Met-341 each coordinate UDP-N-acetyl-alpha-D-glucosamine.

The protein belongs to the EPSP synthase family. MurA subfamily.

The protein localises to the cytoplasm. It carries out the reaction phosphoenolpyruvate + UDP-N-acetyl-alpha-D-glucosamine = UDP-N-acetyl-3-O-(1-carboxyvinyl)-alpha-D-glucosamine + phosphate. The protein operates within cell wall biogenesis; peptidoglycan biosynthesis. In terms of biological role, cell wall formation. Adds enolpyruvyl to UDP-N-acetylglucosamine. This Bacteroides fragilis (strain ATCC 25285 / DSM 2151 / CCUG 4856 / JCM 11019 / LMG 10263 / NCTC 9343 / Onslow / VPI 2553 / EN-2) protein is UDP-N-acetylglucosamine 1-carboxyvinyltransferase.